We begin with the raw amino-acid sequence, 1119 residues long: DNA-directed RNA polymerase D subunit 2b (1119 aa).

Residue Asp732 participates in Mg(2+) binding. Residues Cys1055, Cys1058, Cys1080, and Cys1083 each contribute to the Zn(2+) site. The C4-type zinc-finger motif lies at 1055 to 1083 (CRKCKTYANVIERTPSSGRKIRGPYCRVC).

Belongs to the RNA polymerase beta chain family. In terms of assembly, component of the RNA polymerase IVa and IVb (Pol IV) complexes.

Its subcellular location is the nucleus. It carries out the reaction RNA(n) + a ribonucleoside 5'-triphosphate = RNA(n+1) + diphosphate. Its function is as follows. DNA-dependent RNA polymerase catalyzes the transcription of DNA into RNA using the four ribonucleoside triphosphates as substrates. Second largest component of RNA polymerase IVa and IVb which mediate short-interfering RNAs (siRNA) accumulation and subsequent RNA-directed DNA methylation-dependent (RdDM) silencing of endogenous repeated sequences, including transposable largest subunit. Also required for full erasure of methylation elements. Required for intercellular RNA interference (RNAi) leading to systemic post-transcriptional gene silencing. This Arabidopsis thaliana (Mouse-ear cress) protein is DNA-directed RNA polymerase D subunit 2b (NRPD2b).